Here is an 877-residue protein sequence, read N- to C-terminus: MNEKYAALKSNVRMLGHLLGNTIRDAHGEEIFEKVETIRKLSKSAQAGNQADRESLIEEIKHLPDEQLTPVTRAFNQFLNLTNIAEQYHTISRHCEEHICEPDAINSLFSKLVQNDVSKLDTAQAVRDLNIELVLTAHPTEITRRTMINKLVKINECLSKLELSDLSSKERKKTERRLEQLIAQSWHSDVIRQQRPTPLDEAKWGFAVVENSLWEAVPDFLREMNDRLKSYLGEGLPIDARPVHFSSWMGGDRDGNPFVTHSVTREVLLLSRWKAADLYLNDINELISELSMTVSNDQVRELAGEDQHEPYRAILKQLRALLNETKDILDAKIHGQKLAVKAPLQKVEQLWDPLYACYQSLHECGMGVIADGSLLDTLRRVKAFGVHLVRLDIRQESTRHADVLSELTRYLGIGDYEQWSEQDKIAFLTNELASKRPLLPRDWEPSEPVKEVLDTCKIIALQPREAFGAYVISMARTASDVLAVHLLLQEAGCPYRMDVCPLFETLDDLNNAESVIKQLMSIDLYRGFIQNHQMVMIGYSDSAKDAGVMSAGWAQYHAMESLVKVAEDEGVELTLFHGRGGTVGRGGAPAHAALLSQPPKSLKGGLRVTEQGEMIRFKLGLPDVAVNSFNLYASAILEANLLPPPEPKQEWRDLMEVLSEVSCEAYRGVVRGEPDFVPYFRQATPELELGKLPLGSRPAKRNPNGGVESLRAIPWIFSWSQNRLVLPAWLGAGEAIQYSVDKGHQALLEEMCREWPFFSTRLGMLEMVYTKCNMEISRYYDQRLVEPQLQPLGDRLREQLQRDIKSVLNVENNENLMQSDPWGQESIRLRNIYVEPLNMLQAELLYRTRQTEEASANLEEALMVTIAGIAAGMRNTG.

Residues His-138 and Lys-544 contribute to the active site.

Belongs to the PEPCase type 1 family. Requires Mg(2+) as cofactor.

It carries out the reaction oxaloacetate + phosphate = phosphoenolpyruvate + hydrogencarbonate. Its function is as follows. Forms oxaloacetate, a four-carbon dicarboxylic acid source for the tricarboxylic acid cycle. The polypeptide is Phosphoenolpyruvate carboxylase (Vibrio parahaemolyticus serotype O3:K6 (strain RIMD 2210633)).